A 187-amino-acid chain; its full sequence is Elongation factor P (187 aa).

It belongs to the elongation factor P family.

It localises to the cytoplasm. Its pathway is protein biosynthesis; polypeptide chain elongation. Involved in peptide bond synthesis. Stimulates efficient translation and peptide-bond synthesis on native or reconstituted 70S ribosomes in vitro. Probably functions indirectly by altering the affinity of the ribosome for aminoacyl-tRNA, thus increasing their reactivity as acceptors for peptidyl transferase. The polypeptide is Elongation factor P (Rhodospirillum rubrum (strain ATCC 11170 / ATH 1.1.1 / DSM 467 / LMG 4362 / NCIMB 8255 / S1)).